Reading from the N-terminus, the 676-residue chain is DNA-directed RNA polymerase subunit beta' (676 aa).

Residues Cys69, Cys71, Cys87, and Cys90 each coordinate Zn(2+). Mg(2+) contacts are provided by Asp489, Asp491, and Asp493.

This sequence belongs to the RNA polymerase beta' chain family. RpoC1 subfamily. In plastids the minimal PEP RNA polymerase catalytic core is composed of four subunits: alpha, beta, beta', and beta''. When a (nuclear-encoded) sigma factor is associated with the core the holoenzyme is formed, which can initiate transcription. The cofactor is Mg(2+). Requires Zn(2+) as cofactor.

It localises to the plastid. The protein localises to the chloroplast. The catalysed reaction is RNA(n) + a ribonucleoside 5'-triphosphate = RNA(n+1) + diphosphate. In terms of biological role, DNA-dependent RNA polymerase catalyzes the transcription of DNA into RNA using the four ribonucleoside triphosphates as substrates. This Lolium perenne (Perennial ryegrass) protein is DNA-directed RNA polymerase subunit beta'.